The chain runs to 264 residues: Thymidylate synthase (264 aa).

A dUMP-binding site is contributed by Arg21. His51 is a (6R)-5,10-methylene-5,6,7,8-tetrahydrofolate binding site. 126–127 (RR) contacts dUMP. Cys146 functions as the Nucleophile in the catalytic mechanism. Residues 166–169 (RSAD), Asn177, and 207–209 (HLY) each bind dUMP. Position 169 (Asp169) interacts with (6R)-5,10-methylene-5,6,7,8-tetrahydrofolate. Ala263 contributes to the (6R)-5,10-methylene-5,6,7,8-tetrahydrofolate binding site.

It belongs to the thymidylate synthase family. Bacterial-type ThyA subfamily. As to quaternary structure, homodimer.

Its subcellular location is the cytoplasm. The catalysed reaction is dUMP + (6R)-5,10-methylene-5,6,7,8-tetrahydrofolate = 7,8-dihydrofolate + dTMP. Its pathway is pyrimidine metabolism; dTTP biosynthesis. In terms of biological role, catalyzes the reductive methylation of 2'-deoxyuridine-5'-monophosphate (dUMP) to 2'-deoxythymidine-5'-monophosphate (dTMP) while utilizing 5,10-methylenetetrahydrofolate (mTHF) as the methyl donor and reductant in the reaction, yielding dihydrofolate (DHF) as a by-product. This enzymatic reaction provides an intracellular de novo source of dTMP, an essential precursor for DNA biosynthesis. The chain is Thymidylate synthase from Azoarcus sp. (strain BH72).